We begin with the raw amino-acid sequence, 218 residues long: Akirin (218 aa).

The disordered stretch occupies residues 96-150 (KAIPRSNDFDDDGDQRGDGCSSNYSKAYRAPSSPKSGSDSEGEAPSTSVTDRSSA). Over residues 128-147 (SPKSGSDSEGEAPSTSVTDR) the composition is skewed to polar residues.

The protein belongs to the akirin family. As to quaternary structure, interacts with hda-1, a component of the NuRD complex. Interacts with let-418, a component of the NuRD and MEC complexes. Interacts with the transcription factor ceh-18. Interacts with ima-2. As to expression, localizes to somatic tissues throughout the body, including muscle cells. Expressed in lateral epithelial seam cells, the hyp7 epidermal syncytium, and multiple head and tail neurons.

The protein localises to the nucleus. In terms of biological role, molecular adapter that acts as a bridge between a variety of multiprotein complexes, and which is involved in antifungal innate immunity, development of the muscle and sister chromatid cohesion. Plays a role in antifungal innate immunity by acting as a bridge between components of the NuRD (Nucleosome Remodeling and Deacetylase) and MEC chromatin remodeling complexes. NuRD and MEC complexes bind to the promoters of antimicrobial peptide genes and may recruit other proteins such as ceh-18 to control gene expression in response to fungal infection. During meiotic prophase I, plays a role in the disassembly of synaptonemal complex proteins and in the regulation of chromosome condensation and segregation. Together with nuclear import receptor ima-2, required for the import and load of cohesin complex proteins in meiotic nuclei, possibly by acting as a bridge between ima-2 and cohesins. Required for embryonic development of muscle tissue. The protein is Akirin of Caenorhabditis elegans.